The primary structure comprises 350 residues: Protein-glutamate methylesterase/protein-glutamine glutaminase 1 (350 aa).

The Response regulatory domain maps to M1–V116. D50 carries the post-translational modification 4-aspartylphosphate. The 191-residue stretch at L160–H350 folds into the CheB-type methylesterase domain. Catalysis depends on residues S172, H198, and D294.

This sequence belongs to the CheB family. Phosphorylated by CheA. Phosphorylation of the N-terminal regulatory domain activates the methylesterase activity.

The protein localises to the cytoplasm. The catalysed reaction is [protein]-L-glutamate 5-O-methyl ester + H2O = L-glutamyl-[protein] + methanol + H(+). It catalyses the reaction L-glutaminyl-[protein] + H2O = L-glutamyl-[protein] + NH4(+). In terms of biological role, involved in chemotaxis. Part of a chemotaxis signal transduction system that modulates chemotaxis in response to various stimuli. Catalyzes the demethylation of specific methylglutamate residues introduced into the chemoreceptors (methyl-accepting chemotaxis proteins or MCP) by CheR. Also mediates the irreversible deamidation of specific glutamine residues to glutamic acid. This Photobacterium profundum (strain SS9) protein is Protein-glutamate methylesterase/protein-glutamine glutaminase 1.